The sequence spans 497 residues: tRNA-2-methylthio-N(6)-dimethylallyladenosine synthase (497 aa).

Residues 4–120 form the MTTase N-terminal domain; it reads RSYEVRTFGC…LPVLLERARH (117 aa). [4Fe-4S] cluster is bound by residues cysteine 13, cysteine 49, cysteine 83, cysteine 157, cysteine 161, and cysteine 164. Residues 143 to 374 form the Radical SAM core domain; that stretch reads RASHHSAWVS…ALQDEVSWAQ (232 aa). Residues 376–445 form the TRAM domain; the sequence is RELVGRRVEL…PHHLTADGPL (70 aa).

This sequence belongs to the methylthiotransferase family. MiaB subfamily. In terms of assembly, monomer. The cofactor is [4Fe-4S] cluster.

It is found in the cytoplasm. It carries out the reaction N(6)-dimethylallyladenosine(37) in tRNA + (sulfur carrier)-SH + AH2 + 2 S-adenosyl-L-methionine = 2-methylsulfanyl-N(6)-dimethylallyladenosine(37) in tRNA + (sulfur carrier)-H + 5'-deoxyadenosine + L-methionine + A + S-adenosyl-L-homocysteine + 2 H(+). Its function is as follows. Catalyzes the methylthiolation of N6-(dimethylallyl)adenosine (i(6)A), leading to the formation of 2-methylthio-N6-(dimethylallyl)adenosine (ms(2)i(6)A) at position 37 in tRNAs that read codons beginning with uridine. This Frankia alni (strain DSM 45986 / CECT 9034 / ACN14a) protein is tRNA-2-methylthio-N(6)-dimethylallyladenosine synthase.